A 215-amino-acid chain; its full sequence is 3-demethoxyubiquinol 3-hydroxylase (215 aa).

Glu-64, Glu-94, His-97, Glu-146, Glu-178, and His-181 together coordinate Fe cation.

The protein belongs to the COQ7 family. Fe cation is required as a cofactor.

The protein resides in the cell membrane. It carries out the reaction a 5-methoxy-2-methyl-3-(all-trans-polyprenyl)benzene-1,4-diol + AH2 + O2 = a 3-demethylubiquinol + A + H2O. Its pathway is cofactor biosynthesis; ubiquinone biosynthesis. Functionally, catalyzes the hydroxylation of 2-nonaprenyl-3-methyl-6-methoxy-1,4-benzoquinol during ubiquinone biosynthesis. This Pseudomonas aeruginosa (strain LESB58) protein is 3-demethoxyubiquinol 3-hydroxylase.